The primary structure comprises 35 residues: Cupiennin-2e (35 aa).

The residue at position 35 (glutamate 35) is a Glutamic acid 1-amide.

In terms of tissue distribution, expressed by the venom gland.

The protein localises to the secreted. The chain is Cupiennin-2e from Cupiennius salei (American wandering spider).